The sequence spans 476 residues: Protein transport protein Sec61 subunit alpha isoform 2 (476 aa).

The Cytoplasmic portion of the chain corresponds to 1 to 32 (MGIKFLEVIKPFCAVLPEIQKPERKIQFREKV). A helical transmembrane segment spans residues 33–53 (LWTAITLFIFLVCCQIPLFGI). The Lumenal portion of the chain corresponds to 54-75 (MSSDSADPFYWMRVILASNRGT). The helical transmembrane segment at 76–96 (LMELGISPIVTSGLIMQLLAG) threads the bilayer. The Cytoplasmic segment spans residues 97-117 (AKIIEVGDTPKDRALFNGAQK). The chain crosses the membrane as a helical span at residues 118–138 (LFGMIITIGQAIVYVMTGMYG). The Lumenal portion of the chain corresponds to 139–144 (DPAEMG). A helical membrane pass occupies residues 145–165 (AGICLLIIIQLFVAGLIVLLL). The Cytoplasmic portion of the chain corresponds to 166–172 (DELLQKG). A helical membrane pass occupies residues 173–193 (YGLGSGISLFIATNICETIVW). Residues 194-240 (KASSPTTINTGRGTEFEGAVIALFHLLATRTDKVRALREAFYRQNLP) lie on the Lumenal side of the membrane. The chain crosses the membrane as a helical span at residues 241–261 (NLMNLIATVFVFAVVIYFQGF). The Cytoplasmic portion of the chain corresponds to 262 to 288 (RVDLPIKSARYRGQYSSYPIKLFYTSN). Residues 289–309 (IPIILQSALVSNLYVISQMLS) traverse the membrane as a helical segment. Over 310-353 (VRFSGNFLVNLLGQWADVSGGGPARSYPVGGLCYYLSPPESMGA) the chain is Lumenal. The chain crosses the membrane as a helical span at residues 354–374 (ILEDPVHVVVYIIFMLGSCAF). The Cytoplasmic portion of the chain corresponds to 375–420 (FSKTWIEVSGSSAKDVAKQLKEQQMVMRGHRDTSMVHELNRYIPTA). The next 2 helical transmembrane spans lie at 421–441 (AAFG…LGAI) and 442–462 (GSGT…EIFV). The Cytoplasmic portion of the chain corresponds to 463-476 (KEQAEVGGMGALFF).

The protein belongs to the SecY/SEC61-alpha family. In terms of assembly, the SEC61 channel-forming translocon complex consists of channel-forming core components SEC61A1, SEC61B and SEC61G and different auxiliary components such as SEC62 and SEC63.

It localises to the endoplasmic reticulum membrane. Its function is as follows. Component of SEC61 channel-forming translocon complex that mediates transport of signal peptide-containing precursor polypeptides across the endoplasmic reticulum (ER). Forms a ribosome receptor and a gated pore in the ER membrane, both functions required for cotranslational translocation of nascent polypeptides. In Pongo abelii (Sumatran orangutan), this protein is Protein transport protein Sec61 subunit alpha isoform 2 (SEC61A2).